The chain runs to 178 residues: Adenine phosphoribosyltransferase (178 aa).

This sequence belongs to the purine/pyrimidine phosphoribosyltransferase family. In terms of assembly, homodimer.

Its subcellular location is the cytoplasm. The enzyme catalyses AMP + diphosphate = 5-phospho-alpha-D-ribose 1-diphosphate + adenine. It functions in the pathway purine metabolism; AMP biosynthesis via salvage pathway; AMP from adenine: step 1/1. Its function is as follows. Catalyzes a salvage reaction resulting in the formation of AMP, that is energically less costly than de novo synthesis. The sequence is that of Adenine phosphoribosyltransferase from Cereibacter sphaeroides (strain ATCC 17025 / ATH 2.4.3) (Rhodobacter sphaeroides).